The chain runs to 397 residues: ATP-dependent RNA helicase eIF4A (397 aa).

Residues 23-51 (YTFDDLNLKPNIVRGIFGYGYESPSAIQQ) carry the Q motif motif. Positions 54 to 224 (ILPITEGRDV…TKFMNNPVRI (171 aa)) constitute a Helicase ATP-binding domain. 67–74 (AQSGTGKT) is an ATP binding site. The DEAD box signature appears at 172–175 (DEAD). The 162-residue stretch at 235–396 (GIKQFYINVE…EMPADIGALF (162 aa)) folds into the Helicase C-terminal domain.

The protein belongs to the DEAD box helicase family. eIF4A subfamily. Component of the eIF4F complex, which composition varies with external and internal environmental conditions. It is composed of at least eIF4A, eIF4E and eIF4G.

Its subcellular location is the cytoplasm. It catalyses the reaction ATP + H2O = ADP + phosphate + H(+). ATP-dependent RNA helicase which is a subunit of the eIF4F complex involved in cap recognition and is required for mRNA binding to ribosome. In the current model of translation initiation, eIF4A unwinds RNA secondary structures in the 5'-UTR of mRNAs which is necessary to allow efficient binding of the small ribosomal subunit, and subsequent scanning for the initiator codon. The protein is ATP-dependent RNA helicase eIF4A (TIF1) of Debaryomyces hansenii (strain ATCC 36239 / CBS 767 / BCRC 21394 / JCM 1990 / NBRC 0083 / IGC 2968) (Yeast).